Here is a 484-residue protein sequence, read N- to C-terminus: Malonate-semialdehyde dehydrogenase 1 (484 aa).

Residues Phe-154, Lys-178, Glu-181, Arg-182, and Ser-231 each contribute to the NAD(+) site. Cys-286 (nucleophile) is an active-site residue. Glu-384 contacts NAD(+).

Belongs to the aldehyde dehydrogenase family. IolA subfamily. As to quaternary structure, homotetramer.

It carries out the reaction 3-oxopropanoate + NAD(+) + CoA + H2O = hydrogencarbonate + acetyl-CoA + NADH + H(+). The enzyme catalyses 2-methyl-3-oxopropanoate + NAD(+) + CoA + H2O = propanoyl-CoA + hydrogencarbonate + NADH + H(+). Its pathway is polyol metabolism; myo-inositol degradation into acetyl-CoA; acetyl-CoA from myo-inositol: step 7/7. Its function is as follows. Catalyzes the oxidation of malonate semialdehyde (MSA) and methylmalonate semialdehyde (MMSA) into acetyl-CoA and propanoyl-CoA, respectively. Is involved in a myo-inositol catabolic pathway. Bicarbonate, and not CO2, is the end-product of the enzymatic reaction. The chain is Malonate-semialdehyde dehydrogenase 1 from Bacillus licheniformis (strain ATCC 14580 / DSM 13 / JCM 2505 / CCUG 7422 / NBRC 12200 / NCIMB 9375 / NCTC 10341 / NRRL NRS-1264 / Gibson 46).